The primary structure comprises 852 residues: Gamma-tubulin complex component 2 homolog (852 aa).

Ser73 bears the Phosphoserine mark.

The protein belongs to the TUBGCP family. In terms of assembly, gamma-tubulin small complex (Gamma TuSC) is a heterotetrameric complex which contains two molecules of gamma-tubulin, and one molecule each of Dgrip84 and Dgrip91. The gamma-tubulin in this complex binds preferentially to GDP over GTP.

Its subcellular location is the cytoplasm. The protein localises to the cytoskeleton. The protein resides in the microtubule organizing center. It localises to the centrosome. It is found in the perinuclear region. This Drosophila melanogaster (Fruit fly) protein is Gamma-tubulin complex component 2 homolog (Grip84).